The primary structure comprises 66 residues: Cold shock protein CspA (66 aa).

The 66-residue stretch at 1–66 folds into the CSD domain; sequence MKQGTVKWFN…GPQAANVVKL (66 aa).

It localises to the cytoplasm. Functionally, involved in cold stress response. The polypeptide is Cold shock protein CspA (cspA) (Staphylococcus haemolyticus (strain JCSC1435)).